Consider the following 392-residue polypeptide: MSTSLPPLVEPASALSREEVARYSRHLIIPDLGVDGQKRLKNARVLVIGAGGLGAPTLLYLAAAGVGTIGIVDFDVVDESNLQRQVIHGVADVGRSKAQSARDSIVAINPLIRVRLHELRLAPSNAVDLFKQYDLILDGTDNFATRYLVNDAAVLAGKPYVWGSIYRFEGQASVFWEDAPDGLGVNYRDLYPEPPPPGMVPSCAEGGVLGIICASVASVMGTEAIKLITGIGETLLGRLLVYDALEMSYRTITIRKDPSTPKITELVDYEQFCGVVADDAAQAAKGSTITPRELRDWLDSGRKLALIDVRDPVEWDIVHIDGAQLIPKSLINSGEGLAKLPQDRTAVLYCKTGVRSAEALAAVKKAGFSDAVHLQGGIVAWAKQMQPDMVMY.

Residues 45–65 traverse the membrane as a helical segment; the sequence is VLVIGAGGLGAPTLLYLAAAG. ATP contacts are provided by residues glycine 52, aspartate 73, 80 to 84, lysine 97, and 141 to 142; these read SNLQR and DN. Cysteine 203 (glycyl thioester intermediate; for adenylyltransferase activity) is an active-site residue. In terms of domain architecture, Rhodanese spans 300–390; it reads SGRKLALIDV…WAKQMQPDMV (91 aa). Cysteine 350 serves as the catalytic Cysteine persulfide intermediate; for sulfurtransferase activity.

This sequence in the N-terminal section; belongs to the HesA/MoeB/ThiF family.

Its subcellular location is the membrane. Functionally, catalyzes the conversion of the sulfur carrier protein CysO to CysO-thiocarboxylate. The reaction is thought to proceed in two steps: first, ATP-dependent activation of CysO as acyl-adenylate (CysO-COOAMP), followed by sulfur transfer to give CysO-thiocarboxylate (CysO-COSH). The protein is Probable adenylyltransferase/sulfurtransferase MoeZ (moeZ) of Mycobacterium tuberculosis (strain CDC 1551 / Oshkosh).